The chain runs to 264 residues: Thymidylate synthase (264 aa).

R21 is a dUMP binding site. H51 is a (6R)-5,10-methylene-5,6,7,8-tetrahydrofolate binding site. 126 to 127 (RR) provides a ligand contact to dUMP. Catalysis depends on C146, which acts as the Nucleophile. Residues 166–169 (RSCD), N177, and 207–209 (HLY) each bind dUMP. Residue D169 participates in (6R)-5,10-methylene-5,6,7,8-tetrahydrofolate binding. Residue A263 participates in (6R)-5,10-methylene-5,6,7,8-tetrahydrofolate binding.

This sequence belongs to the thymidylate synthase family. Bacterial-type ThyA subfamily. As to quaternary structure, homodimer.

It is found in the cytoplasm. The enzyme catalyses dUMP + (6R)-5,10-methylene-5,6,7,8-tetrahydrofolate = 7,8-dihydrofolate + dTMP. Its pathway is pyrimidine metabolism; dTTP biosynthesis. In terms of biological role, catalyzes the reductive methylation of 2'-deoxyuridine-5'-monophosphate (dUMP) to 2'-deoxythymidine-5'-monophosphate (dTMP) while utilizing 5,10-methylenetetrahydrofolate (mTHF) as the methyl donor and reductant in the reaction, yielding dihydrofolate (DHF) as a by-product. This enzymatic reaction provides an intracellular de novo source of dTMP, an essential precursor for DNA biosynthesis. In Shewanella baltica (strain OS185), this protein is Thymidylate synthase.